Here is a 528-residue protein sequence, read N- to C-terminus: Protein arginine N-methyltransferase 3 (528 aa).

Residues 1–42 are disordered; that stretch reads MCSLAAGNGQGAELGPEPLELSDSGDDAGWEDEDADAEPAQG. Position 2 is an N-acetylcysteine (C2). Residues S22 and S24 each carry the phosphoserine modification. A compositionally biased stretch (acidic residues) spans 23–37; it reads DSGDDAGWEDEDADA. The C2H2-type zinc-finger motif lies at 46-69; the sequence is TPCLFCDRLFRSAEETFSHCKLEH. The residue at position 169 (S169) is a Phosphoserine. A mediates interaction with ALDH1A1 region spans residues 184–528; the sequence is MKQFAQDFVM…NSSTQTYSLQ (345 aa). Residues 214 to 528 form the SAM-dependent MTase PRMT-type domain; that stretch reads DGVYFSSYGH…NSSTQTYSLQ (315 aa). Residues R236, G260, D282, S284, I310, and E311 each coordinate S-adenosyl-L-homocysteine. Catalysis depends on residues E326 and E335.

It belongs to the class I-like SAM-binding methyltransferase superfamily. Protein arginine N-methyltransferase family. As to quaternary structure, monomer and homodimer. Interacts with EPB41L3 (via FERM domain); the interaction is direct and inhibits the protein-arginine N-methyltransferase activity of PRMT3. Interacts with the 40S ribosomal protein RPS2. Interacts with ALDH1A1; the interaction is direct, inhibits ALDH1A1 aldehyde dehydrogenase activity and is independent of the methyltransferase activity of PRMT3. Ubiquitously expressed.

It localises to the cytoplasm. The protein localises to the cytosol. It is found in the nucleus. It catalyses the reaction L-arginyl-[protein] + S-adenosyl-L-methionine = N(omega)-methyl-L-arginyl-[protein] + S-adenosyl-L-homocysteine + H(+). The enzyme catalyses L-arginyl-[protein] + 2 S-adenosyl-L-methionine = N(omega),N(omega)-dimethyl-L-arginyl-[protein] + 2 S-adenosyl-L-homocysteine + 2 H(+). Its activity is regulated as follows. Inhibited by N-ethylmaleimide and high concentrations of zinc chloride. Functionally, protein-arginine N-methyltransferase that catalyzes both the monomethylation and asymmetric dimethylation of the guanidino nitrogens of arginine residues in target proteins, and therefore falls into the group of type I methyltransferases. Catalyzes the asymmetric arginine dimethylation at multiple sites in the Arg/Gly-rich region of small ribosomal subunit protein uS5/RPS2. Also appears to methylate other ribosomal proteins. May regulate retinoic acid synthesis and signaling by inhibiting ALDH1A1 retinal dehydrogenase activity. Contributes to methylation of histone H4 'Arg-3', a specific tag for epigenetic transcriptional activation. Promotes osteogenesis. The protein is Protein arginine N-methyltransferase 3 of Rattus norvegicus (Rat).